Consider the following 37-residue polypeptide: Large ribosomal subunit protein bL36c (37 aa).

This sequence belongs to the bacterial ribosomal protein bL36 family.

The protein localises to the plastid. Its subcellular location is the chloroplast. This chain is Large ribosomal subunit protein bL36c, found in Chloranthus spicatus (Chulantree).